The following is a 156-amino-acid chain: Large ribosomal subunit protein uL15 (156 aa).

The disordered stretch occupies residues 1-44 (MKLNELRDNPGASPKRTRVGRGPGSGKGKMGGRGIKGQKSRSGV). Over residues 21–35 (RGPGSGKGKMGGRGI) the composition is skewed to gly residues.

Belongs to the universal ribosomal protein uL15 family. In terms of assembly, part of the 50S ribosomal subunit.

In terms of biological role, binds to the 23S rRNA. This Ruegeria sp. (strain TM1040) (Silicibacter sp.) protein is Large ribosomal subunit protein uL15.